A 160-amino-acid polypeptide reads, in one-letter code: Large ribosomal subunit protein uL11 (160 aa).

The protein belongs to the universal ribosomal protein uL11 family. Part of the ribosomal stalk of the 50S ribosomal subunit. Interacts with L10 and the large rRNA to form the base of the stalk. L10 forms an elongated spine to which L12 dimers bind in a sequential fashion forming a multimeric L10(L12)X complex.

Its function is as follows. Forms part of the ribosomal stalk which helps the ribosome interact with GTP-bound translation factors. This Methanococcus aeolicus (strain ATCC BAA-1280 / DSM 17508 / OCM 812 / Nankai-3) protein is Large ribosomal subunit protein uL11.